A 332-amino-acid chain; its full sequence is Putative symporter YfeH (332 aa).

Belongs to the bile acid:sodium symporter (BASS) (TC 2.A.28) family.

In Escherichia coli (strain K12), this protein is Putative symporter YfeH (yfeH).